Here is a 165-residue protein sequence, read N- to C-terminus: Basic leucine zipper 43 (165 aa).

The region spanning 70–133 (NERKQKRKIS…EKVIEENVQL (64 aa)) is the bZIP domain. Residues 72–93 (RKQKRKISNRESARRSRMRKQR) are basic motif. The tract at residues 98-112 (LWSQVMWLRDENHQL) is leucine-zipper.

As to quaternary structure, forms heterodimers with BZIP34 and BZIP61.

The protein resides in the nucleus. In terms of biological role, probable transcription factor involved in somatic embryogenesis. Acts as a positive regulator of BHLH109. The sequence is that of Basic leucine zipper 43 from Arabidopsis thaliana (Mouse-ear cress).